A 63-amino-acid chain; its full sequence is Disintegrin schistatin-like subunit B (63 aa).

Positions 1–63 (NSVNPCCDPQ…TPDCPRNRYN (63 aa)) constitute a Disintegrin domain. Cystine bridges form between cysteine 6–cysteine 29, cysteine 20–cysteine 26, cysteine 25–cysteine 50, and cysteine 38–cysteine 57. Positions 42–44 (RGD) match the Cell attachment site motif.

This sequence belongs to the disintegrin family. Dimeric disintegrin subfamily. In terms of assembly, heterodimer with subunit A; disulfide-linked. In terms of tissue distribution, expressed by the venom gland.

The protein localises to the secreted. Its function is as follows. May bind to both alpha-IIb/beta-3 (ITGA2B/ITGB3) and alpha-V/beta-3 (ITGAV/ITGB3) integrins, and may inhibit platelet aggregation. The sequence is that of Disintegrin schistatin-like subunit B from Echis carinatus (Saw-scaled viper).